Reading from the N-terminus, the 102-residue chain is Small ribosomal subunit protein uS10 (102 aa).

Belongs to the universal ribosomal protein uS10 family. In terms of assembly, part of the 30S ribosomal subunit.

Its function is as follows. Involved in the binding of tRNA to the ribosomes. The polypeptide is Small ribosomal subunit protein uS10 (Streptococcus thermophilus (strain CNRZ 1066)).